We begin with the raw amino-acid sequence, 199 residues long: NAD(P)H dehydrogenase (quinone) (199 aa).

The Flavodoxin-like domain occupies 4–190; it reads VLVLYYSAYG…AGARYQGKTI (187 aa). Residues 10–15 and 78–80 each bind FMN; these read SAYGHI and TRF. Position 12 (Tyr-12) interacts with NAD(+). Trp-98 lines the substrate pocket. Residues 113–119 and His-134 each bind FMN; that span reads STATQHG.

It belongs to the WrbA family. FMN is required as a cofactor.

It catalyses the reaction a quinone + NADH + H(+) = a quinol + NAD(+). The enzyme catalyses a quinone + NADPH + H(+) = a quinol + NADP(+). The protein is NAD(P)H dehydrogenase (quinone) of Rhodopseudomonas palustris (strain TIE-1).